Consider the following 297-residue polypeptide: Methionyl-tRNA formyltransferase (297 aa).

Residues 31 to 52 form a disordered region; sequence QPPRAAGRGQKPRPSPVHRAAE. Position 108 to 111 (108 to 111) interacts with (6S)-5,6,7,8-tetrahydrofolate; the sequence is SLLP.

This sequence belongs to the Fmt family.

The catalysed reaction is L-methionyl-tRNA(fMet) + (6R)-10-formyltetrahydrofolate = N-formyl-L-methionyl-tRNA(fMet) + (6S)-5,6,7,8-tetrahydrofolate + H(+). In terms of biological role, attaches a formyl group to the free amino group of methionyl-tRNA(fMet). The formyl group appears to play a dual role in the initiator identity of N-formylmethionyl-tRNA by promoting its recognition by IF2 and preventing the misappropriation of this tRNA by the elongation apparatus. The protein is Methionyl-tRNA formyltransferase of Paracoccus denitrificans (strain Pd 1222).